Reading from the N-terminus, the 323-residue chain is tRNA dimethylallyltransferase (323 aa).

12-19 (GPTAAGKT) contacts ATP. 14 to 19 (TAAGKT) contacts substrate. Interaction with substrate tRNA regions lie at residues 37–40 (DSAL) and 161–165 (QRLIR).

The protein belongs to the IPP transferase family. In terms of assembly, monomer. The cofactor is Mg(2+).

The catalysed reaction is adenosine(37) in tRNA + dimethylallyl diphosphate = N(6)-dimethylallyladenosine(37) in tRNA + diphosphate. Its function is as follows. Catalyzes the transfer of a dimethylallyl group onto the adenine at position 37 in tRNAs that read codons beginning with uridine, leading to the formation of N6-(dimethylallyl)adenosine (i(6)A). The sequence is that of tRNA dimethylallyltransferase from Pseudomonas entomophila (strain L48).